The chain runs to 896 residues: UPF0182 protein GM21_2279 (896 aa).

The next 7 helical transmembrane spans lie at 6–26 (MTFI…LLSF), 46–66 (VYAQ…FLQL), 99–119 (LVRP…GNWG), 158–180 (LLKS…AYYV), 201–221 (LAVL…LESF), 245–265 (TLRI…LGIW), and 271–291 (LALG…RVYP).

Belongs to the UPF0182 family.

Its subcellular location is the cell membrane. In Geobacter sp. (strain M21), this protein is UPF0182 protein GM21_2279.